Here is a 201-residue protein sequence, read N- to C-terminus: Translation initiation factor IF-3 (201 aa).

Positions 170 to 201 (TPKSASKKGHTPPKTQVEASKQANESAETEEE) are disordered. The segment covering 182–195 (PKTQVEASKQANES) has biased composition (polar residues).

Belongs to the IF-3 family. As to quaternary structure, monomer.

The protein localises to the cytoplasm. Its function is as follows. IF-3 binds to the 30S ribosomal subunit and shifts the equilibrium between 70S ribosomes and their 50S and 30S subunits in favor of the free subunits, thus enhancing the availability of 30S subunits on which protein synthesis initiation begins. The chain is Translation initiation factor IF-3 from Porphyromonas gingivalis (strain ATCC BAA-308 / W83).